Here is a 451-residue protein sequence, read N- to C-terminus: SH2 domain-containing protein 7 (451 aa).

Residues 51-142 enclose the SH2 domain; it reads WFHGFITRKQ…PFKEMLTAAC (92 aa). Disordered regions lie at residues 180–232, 256–321, and 408–436; these read KAAS…SLLE, LGTE…SDAM, and GTPE…THKP. Low complexity predominate over residues 221–232; the sequence is SPLPEKSSSLLE. Residues 279 to 291 show a composition bias toward basic and acidic residues; sequence EAQRRLSDGEQNR. A compositionally biased stretch (polar residues) spans 306–316; sequence QGPTESPTSWG. Basic and acidic residues predominate over residues 426 to 436; the sequence is KSKETGRTHKP.

This Homo sapiens (Human) protein is SH2 domain-containing protein 7 (SH2D7).